Consider the following 546-residue polypeptide: Glucose-6-phosphate isomerase (546 aa).

Residue Glu-357 is the Proton donor of the active site. Active-site residues include His-389 and Lys-509.

The protein belongs to the GPI family.

The protein localises to the cytoplasm. It catalyses the reaction alpha-D-glucose 6-phosphate = beta-D-fructose 6-phosphate. It participates in carbohydrate biosynthesis; gluconeogenesis. It functions in the pathway carbohydrate degradation; glycolysis; D-glyceraldehyde 3-phosphate and glycerone phosphate from D-glucose: step 2/4. In terms of biological role, catalyzes the reversible isomerization of glucose-6-phosphate to fructose-6-phosphate. In Anaeromyxobacter dehalogenans (strain 2CP-1 / ATCC BAA-258), this protein is Glucose-6-phosphate isomerase.